The following is a 164-amino-acid chain: Siroheme decarboxylase alpha subunit (164 aa).

It belongs to the Ahb/Nir family. As to quaternary structure, forms a heterodimer composed of AhbA and AhbB.

The catalysed reaction is siroheme + 2 H(+) = 12,18-didecarboxysiroheme + 2 CO2. It functions in the pathway porphyrin-containing compound metabolism; protoheme biosynthesis. Functionally, involved in siroheme-dependent heme b biosynthesis. Catalyzes the decarboxylation of siroheme into didecarboxysiroheme. The chain is Siroheme decarboxylase alpha subunit from Oleidesulfovibrio alaskensis (strain ATCC BAA-1058 / DSM 17464 / G20) (Desulfovibrio alaskensis).